Reading from the N-terminus, the 436-residue chain is GTPase Der (436 aa).

EngA-type G domains are found at residues 4–167 (PVIA…PKIE) and 176–351 (IRFS…ESHS). Residues 10–17 (GRPNVGKS), 57–61 (DTGGI), 119–122 (NKVD), 182–189 (GRPNVGKS), 229–233 (DTAGM), and 294–297 (NKWD) contribute to the GTP site. Residues 352–436 (IRIQTNVLND…PIHIIARARD (85 aa)) enclose the KH-like domain.

Belongs to the TRAFAC class TrmE-Era-EngA-EngB-Septin-like GTPase superfamily. EngA (Der) GTPase family. In terms of assembly, associates with the 50S ribosomal subunit.

Its function is as follows. GTPase that plays an essential role in the late steps of ribosome biogenesis. This chain is GTPase Der, found in Bacillus cereus (strain ATCC 10987 / NRS 248).